A 151-amino-acid polypeptide reads, in one-letter code: Methylglyoxal synthase (151 aa).

Positions 6–151 constitute an MGS-like domain; it reads RVMPAHKHIA…DYDAYLAERV (146 aa). Substrate contacts are provided by residues His19, Lys23, 45–48, and 65–66; these read TGTT and SG. Catalysis depends on Asp71, which acts as the Proton donor/acceptor. His98 contributes to the substrate binding site.

Belongs to the methylglyoxal synthase family.

The enzyme catalyses dihydroxyacetone phosphate = methylglyoxal + phosphate. Its function is as follows. Catalyzes the formation of methylglyoxal from dihydroxyacetone phosphate. In Aliivibrio fischeri (strain MJ11) (Vibrio fischeri), this protein is Methylglyoxal synthase.